The chain runs to 178 residues: ATP synthase subunit delta (178 aa).

This sequence belongs to the ATPase delta chain family. As to quaternary structure, F-type ATPases have 2 components, F(1) - the catalytic core - and F(0) - the membrane proton channel. F(1) has five subunits: alpha(3), beta(3), gamma(1), delta(1), epsilon(1). F(0) has three main subunits: a(1), b(2) and c(10-14). The alpha and beta chains form an alternating ring which encloses part of the gamma chain. F(1) is attached to F(0) by a central stalk formed by the gamma and epsilon chains, while a peripheral stalk is formed by the delta and b chains.

The protein localises to the cell inner membrane. F(1)F(0) ATP synthase produces ATP from ADP in the presence of a proton or sodium gradient. F-type ATPases consist of two structural domains, F(1) containing the extramembraneous catalytic core and F(0) containing the membrane proton channel, linked together by a central stalk and a peripheral stalk. During catalysis, ATP synthesis in the catalytic domain of F(1) is coupled via a rotary mechanism of the central stalk subunits to proton translocation. Its function is as follows. This protein is part of the stalk that links CF(0) to CF(1). It either transmits conformational changes from CF(0) to CF(1) or is implicated in proton conduction. The polypeptide is ATP synthase subunit delta (Dechloromonas aromatica (strain RCB)).